A 295-amino-acid polypeptide reads, in one-letter code: Phosphatidylserine decarboxylase proenzyme (295 aa).

Active-site charge relay system; for autoendoproteolytic cleavage activity residues include Asp113, His169, and Ser256. The Schiff-base intermediate with substrate; via pyruvic acid; for decarboxylase activity role is filled by Ser256. Ser256 is modified (pyruvic acid (Ser); by autocatalysis).

Belongs to the phosphatidylserine decarboxylase family. PSD-B subfamily. Prokaryotic type II sub-subfamily. As to quaternary structure, heterodimer of a large membrane-associated beta subunit and a small pyruvoyl-containing alpha subunit. Requires pyruvate as cofactor. Post-translationally, is synthesized initially as an inactive proenzyme. Formation of the active enzyme involves a self-maturation process in which the active site pyruvoyl group is generated from an internal serine residue via an autocatalytic post-translational modification. Two non-identical subunits are generated from the proenzyme in this reaction, and the pyruvate is formed at the N-terminus of the alpha chain, which is derived from the carboxyl end of the proenzyme. The autoendoproteolytic cleavage occurs by a canonical serine protease mechanism, in which the side chain hydroxyl group of the serine supplies its oxygen atom to form the C-terminus of the beta chain, while the remainder of the serine residue undergoes an oxidative deamination to produce ammonia and the pyruvoyl prosthetic group on the alpha chain. During this reaction, the Ser that is part of the protease active site of the proenzyme becomes the pyruvoyl prosthetic group, which constitutes an essential element of the active site of the mature decarboxylase.

It localises to the cell membrane. The enzyme catalyses a 1,2-diacyl-sn-glycero-3-phospho-L-serine + H(+) = a 1,2-diacyl-sn-glycero-3-phosphoethanolamine + CO2. It functions in the pathway phospholipid metabolism; phosphatidylethanolamine biosynthesis; phosphatidylethanolamine from CDP-diacylglycerol: step 2/2. Catalyzes the formation of phosphatidylethanolamine (PtdEtn) from phosphatidylserine (PtdSer). The chain is Phosphatidylserine decarboxylase proenzyme from Clostridium botulinum (strain Kyoto / Type A2).